The sequence spans 194 residues: Threonylcarbamoyl-AMP synthase (194 aa).

The YrdC-like domain occupies 12-194 (SPNMKDLLIQ…DVMTGKLIRE (183 aa)).

It belongs to the SUA5 family. TsaC subfamily.

The protein localises to the cytoplasm. The enzyme catalyses L-threonine + hydrogencarbonate + ATP = L-threonylcarbamoyladenylate + diphosphate + H2O. Functionally, required for the formation of a threonylcarbamoyl group on adenosine at position 37 (t(6)A37) in tRNAs that read codons beginning with adenine. Catalyzes the conversion of L-threonine, HCO(3)(-)/CO(2) and ATP to give threonylcarbamoyl-AMP (TC-AMP) as the acyladenylate intermediate, with the release of diphosphate. In Blochmanniella pennsylvanica (strain BPEN), this protein is Threonylcarbamoyl-AMP synthase.